Reading from the N-terminus, the 444-residue chain is Tubulin beta chain (444 aa).

GTP-binding residues include Gln-11, Glu-69, Ser-138, Gly-142, Thr-143, Gly-144, Asn-204, and Asn-226. Glu-69 lines the Mg(2+) pocket.

The protein belongs to the tubulin family. In terms of assembly, dimer of alpha and beta chains. A typical microtubule is a hollow water-filled tube with an outer diameter of 25 nm and an inner diameter of 15 nM. Alpha-beta heterodimers associate head-to-tail to form protofilaments running lengthwise along the microtubule wall with the beta-tubulin subunit facing the microtubule plus end conferring a structural polarity. Microtubules usually have 13 protofilaments but different protofilament numbers can be found in some organisms and specialized cells. It depends on Mg(2+) as a cofactor.

It localises to the cytoplasm. Its subcellular location is the cytoskeleton. Tubulin is the major constituent of microtubules, a cylinder consisting of laterally associated linear protofilaments composed of alpha- and beta-tubulin heterodimers. Microtubules grow by the addition of GTP-tubulin dimers to the microtubule end, where a stabilizing cap forms. Below the cap, tubulin dimers are in GDP-bound state, owing to GTPase activity of alpha-tubulin. The chain is Tubulin beta chain from Trichuris trichiura (Whipworm).